The following is a 457-amino-acid chain: Exodeoxyribonuclease 7 large subunit (457 aa).

The protein belongs to the XseA family. Heterooligomer composed of large and small subunits.

The protein resides in the cytoplasm. It catalyses the reaction Exonucleolytic cleavage in either 5'- to 3'- or 3'- to 5'-direction to yield nucleoside 5'-phosphates.. Functionally, bidirectionally degrades single-stranded DNA into large acid-insoluble oligonucleotides, which are then degraded further into small acid-soluble oligonucleotides. This chain is Exodeoxyribonuclease 7 large subunit, found in Enterobacter sp. (strain 638).